A 246-amino-acid chain; its full sequence is Transcription factor A, mitochondrial (246 aa).

A mitochondrion-targeting transit peptide spans 1 to 42; it reads MAFLRSMWGVLSALGRSGAELCTGCGSRLRSPFSFVYLPRWF. The HMG box 1 DNA-binding region spans 50–118; the sequence is PKKPVSSYLR…VYKEEISRFK (69 aa). Residues Ser55, Ser56, and Ser61 each carry the phosphoserine; by PKA modification. Thr122 is modified (phosphothreonine). Positions 155–219 form a DNA-binding region, HMG box 2; sequence PKRPRSAYNV…RYHNEMKSWE (65 aa). At Ser160 the chain carries Phosphoserine; by PKA. A phosphoserine mark is found at Ser193 and Ser195.

Monomer; binds DNA as a monomer. Homodimer. Component of the mitochondrial transcription initiation complex, composed at least of TFB2M, TFAM and POLRMT. In this complex TFAM recruits POLRMT to the promoter whereas TFB2M induces structural changes in POLRMT to enable promoter opening and trapping of the DNA non-template strand. Upon metabolic stress, forms a complex composed of FOXO3, SIRT3, TFAM and POLRMT. Interacts with TFB1M and TFB2M. Interacts with CLPX; this enhances DNA-binding. In terms of processing, phosphorylation by PKA within the HMG box 1 impairs DNA binding and promotes degradation by the AAA+ Lon protease.

The protein localises to the mitochondrion. The protein resides in the mitochondrion matrix. It is found in the mitochondrion nucleoid. Functionally, binds to the mitochondrial light strand promoter and functions in mitochondrial transcription regulation. Component of the mitochondrial transcription initiation complex, composed at least of TFB2M, TFAM and POLRMT that is required for basal transcription of mitochondrial DNA. In this complex, TFAM recruits POLRMT to a specific promoter whereas TFB2M induces structural changes in POLRMT to enable promoter opening and trapping of the DNA non-template strand. Required for accurate and efficient promoter recognition by the mitochondrial RNA polymerase. Promotes transcription initiation from the HSP1 and the light strand promoter by binding immediately upstream of transcriptional start sites. Is able to unwind DNA. Bends the mitochondrial light strand promoter DNA into a U-turn shape via its HMG boxes. Required for maintenance of normal levels of mitochondrial DNA. May play a role in organizing and compacting mitochondrial DNA. The sequence is that of Transcription factor A, mitochondrial from Homo sapiens (Human).